We begin with the raw amino-acid sequence, 325 residues long: Cytochrome c1, heme protein, mitochondrial (325 aa).

Residues methionine 1–alanine 84 constitute a mitochondrion transit peptide. At serine 85–arginine 287 the chain is on the mitochondrial intermembrane side. The region spanning threonine 108–aspartate 209 is the Cytochrome c domain. Cysteine 121, cysteine 124, histidine 125, and methionine 244 together coordinate heme c. The helical transmembrane segment at methionine 288–arginine 308 threads the bilayer. The Mitochondrial matrix segment spans residues histidine 309 to lysine 325.

Belongs to the cytochrome c family. In terms of assembly, component of the ubiquinol-cytochrome c oxidoreductase (cytochrome b-c1 complex, complex III, CIII), a multisubunit enzyme composed of 11 subunits. The complex is composed of 3 respiratory subunits cytochrome b, cytochrome c1 and Rieske protein UQCRFS1, 2 core protein subunits UQCRC1/QCR1 and UQCRC2/QCR2, and 6 low-molecular weight protein subunits UQCRH/QCR6, UQCRB/QCR7, UQCRQ/QCR8, UQCR10/QCR9, UQCR11/QCR10 and subunit 9, the cleavage product of Rieske protein UQCRFS1. The complex exists as an obligatory dimer and forms supercomplexes (SCs) in the inner mitochondrial membrane with NADH-ubiquinone oxidoreductase (complex I, CI) and cytochrome c oxidase (complex IV, CIV), resulting in different assemblies (supercomplex SCI(1)III(2)IV(1) and megacomplex MCI(2)III(2)IV(2)). Interacts with FLVCR2; this interaction occurs in the absence of heme and is disrupted upon heme binding. Heme c serves as cofactor.

Its subcellular location is the mitochondrion inner membrane. The catalysed reaction is a quinol + 2 Fe(III)-[cytochrome c](out) = a quinone + 2 Fe(II)-[cytochrome c](out) + 2 H(+)(out). Component of the ubiquinol-cytochrome c oxidoreductase, a multisubunit transmembrane complex that is part of the mitochondrial electron transport chain which drives oxidative phosphorylation. The respiratory chain contains 3 multisubunit complexes succinate dehydrogenase (complex II, CII), ubiquinol-cytochrome c oxidoreductase (cytochrome b-c1 complex, complex III, CIII) and cytochrome c oxidase (complex IV, CIV), that cooperate to transfer electrons derived from NADH and succinate to molecular oxygen, creating an electrochemical gradient over the inner membrane that drives transmembrane transport and the ATP synthase. The cytochrome b-c1 complex catalyzes electron transfer from ubiquinol to cytochrome c, linking this redox reaction to translocation of protons across the mitochondrial inner membrane, with protons being carried across the membrane as hydrogens on the quinol. In the process called Q cycle, 2 protons are consumed from the matrix, 4 protons are released into the intermembrane space and 2 electrons are passed to cytochrome c. Cytochrome c1 is a catalytic core subunit containing a c-type heme. It transfers electrons from the [2Fe-2S] iron-sulfur cluster of the Rieske protein to cytochrome c. The polypeptide is Cytochrome c1, heme protein, mitochondrial (Cyc1) (Mus musculus (Mouse)).